An 80-amino-acid chain; its full sequence is MAKSAAIITFLFAALVLFAAFEAPIMVEAQKLCEKPSGTWSGVCGNSNACKNQCINLEGAKHGSCNYVFPAHKCICYFPC.

The signal sequence occupies residues 1 to 29 (MAKSAAIITFLFAALVLFAAFEAPIMVEA). Gln30 carries the pyrrolidone carboxylic acid modification. Intrachain disulfides connect Cys33/Cys80, Cys44/Cys65, Cys50/Cys74, and Cys54/Cys76.

It belongs to the DEFL family.

Its subcellular location is the secreted. Functionally, confers broad-spectrum resistance to pathogens. Has antifungal activity in vitro. The chain is Defensin-like protein 14 (PDF1.3) from Arabidopsis thaliana (Mouse-ear cress).